A 155-amino-acid chain; its full sequence is Ribonuclease H (155 aa).

An RNase H type-1 domain is found at 1 to 142 (MLKQVEIFTD…CDELARAAAM (142 aa)). Residues Asp-10, Glu-48, Asp-70, and Asp-134 each coordinate Mg(2+).

This sequence belongs to the RNase H family. In terms of assembly, monomer. Mg(2+) serves as cofactor.

It is found in the cytoplasm. It catalyses the reaction Endonucleolytic cleavage to 5'-phosphomonoester.. In terms of biological role, endonuclease that specifically degrades the RNA of RNA-DNA hybrids. In Escherichia fergusonii (strain ATCC 35469 / DSM 13698 / CCUG 18766 / IAM 14443 / JCM 21226 / LMG 7866 / NBRC 102419 / NCTC 12128 / CDC 0568-73), this protein is Ribonuclease H.